The following is an 832-amino-acid chain: Protein P (832 aa).

The interval 1–177 (MPLSYQHFRK…FCGSPYSWEQ (177 aa)) is terminal protein domain (TP). The interval 178-335 (ELQHGAESFH…YCLSHIVNLL (158 aa)) is spacer. Over residues 186–206 (FHQQSSGILSRPSVGSSLQSK) the composition is skewed to polar residues. 2 disordered regions span residues 186–255 (FHQQ…GHNA) and 280–305 (TSEN…RSQS). Residues 210 to 220 (SRLGLQSQQGH) are compositionally biased toward low complexity. The tract at residues 336-679 (EDWGPCAEHG…YLNLYPVARQ (344 aa)) is polymerase/reverse transcriptase domain (RT). The region spanning 346–589 (EHHIRIPRTP…YSLNFMGYVI (244 aa)) is the Reverse transcriptase domain. Mg(2+) contacts are provided by Asp-418, Asp-540, and Asp-541.

Belongs to the hepadnaviridae P protein family.

It carries out the reaction DNA(n) + a 2'-deoxyribonucleoside 5'-triphosphate = DNA(n+1) + diphosphate. It catalyses the reaction Endonucleolytic cleavage to 5'-phosphomonoester.. With respect to regulation, activated by host HSP70 and HSP40 in vitro to be able to bind the epsilon loop of the pgRNA. Because deletion of the RNase H region renders the protein partly chaperone-independent, the chaperones may be needed indirectly to relieve occlusion of the RNA-binding site by this domain. Inhibited by several reverse-transcriptase inhibitors: Lamivudine, Adefovir and Entecavir. In terms of biological role, multifunctional enzyme that converts the viral RNA genome into dsDNA in viral cytoplasmic capsids. This enzyme displays a DNA polymerase activity that can copy either DNA or RNA templates, and a ribonuclease H (RNase H) activity that cleaves the RNA strand of RNA-DNA heteroduplexes in a partially processive 3'- to 5'-endonucleasic mode. Neo-synthesized pregenomic RNA (pgRNA) are encapsidated together with the P protein, and reverse-transcribed inside the nucleocapsid. Initiation of reverse-transcription occurs first by binding the epsilon loop on the pgRNA genome, and is initiated by protein priming, thereby the 5'-end of (-)DNA is covalently linked to P protein. Partial (+)DNA is synthesized from the (-)DNA template and generates the relaxed circular DNA (RC-DNA) genome. After budding and infection, the RC-DNA migrates in the nucleus, and is converted into a plasmid-like covalently closed circular DNA (cccDNA). The activity of P protein does not seem to be necessary for cccDNA generation, and is presumably released from (+)DNA by host nuclear DNA repair machinery. This Hepatitis B virus genotype D subtype ayw (isolate Australia/AustKW/1991) (HBV-D) protein is Protein P.